A 360-amino-acid polypeptide reads, in one-letter code: MKPSIVAKLEALQERHEEVLAHLGDADVIADQERFRALSREYAQLTDVTNCFKAWSAVQDDLKAAEIMLDDPEMREMAQEEIRDAKVRNEELEQQLQLLLLPKDPDDERNCFLEVRAGTGGDEAAIFAGDLFRMYSRYAESRRWKVEVISANDGEHGGYKEIIAKVSGEQVYGHLKFESGGHRVQRVPETESQGRIHTSACTVAVLPEIPDAELPEISPSDLRIDTFRSSGAGGQHVNTTDSAIRITHIPTGIVVECQDERSQHKNKAKAMSVLAARIRAAEVRKRQEAEASERRNLLGSGDRSDRNRTYNFPQGRVTDHRINLTLYRLDEVIEGKLDMLVQPIVNEYQADLLSALSEQD.

N5-methylglutamine is present on Gln-235. Positions 285–308 (KRQEAEASERRNLLGSGDRSDRNR) are enriched in basic and acidic residues. The interval 285-313 (KRQEAEASERRNLLGSGDRSDRNRTYNFP) is disordered.

This sequence belongs to the prokaryotic/mitochondrial release factor family. Methylated by PrmC. Methylation increases the termination efficiency of RF1.

It localises to the cytoplasm. In terms of biological role, peptide chain release factor 1 directs the termination of translation in response to the peptide chain termination codons UAG and UAA. This is Peptide chain release factor 1 from Photorhabdus laumondii subsp. laumondii (strain DSM 15139 / CIP 105565 / TT01) (Photorhabdus luminescens subsp. laumondii).